The following is a 546-amino-acid chain: uncharacterized protein (546 aa).

Transmembrane regions (helical) follow at residues 27 to 46 (EALV…PFVF), 59 to 78 (NGLI…ALVT), 83 to 100 (FALI…YAIL), 114 to 134 (SVLF…AYAA), 143 to 163 (PLII…IPIF), 176 to 196 (MLYS…ALGI), 204 to 224 (VIAV…VFTA), 237 to 257 (LSSA…FGVF), and 268 to 288 (MIWI…LIGW).

The protein localises to the cell membrane. This is an uncharacterized protein from Bacillus subtilis (strain 168).